A 1684-amino-acid chain; its full sequence is GRIP and coiled-coil domain-containing protein 2 (1684 aa).

At M1 the chain carries N-acetylmethionine. The tract at residues 1–22 (MEDLVQDGVASPATPGTGKSKL) is disordered. Position 11 is a phosphoserine (S11). T14 carries the post-translational modification Phosphothreonine. Positions 110–1618 (VTKMGDAHKE…REKSAANLEY (1509 aa)) form a coiled coil. Phosphoserine is present on residues S236, S1483, and S1487. The interval 1475-1502 (LKNEPTTRSPVSSQQSLKNLRERRNTDL) is disordered. The segment covering 1477–1492 (NEPTTRSPVSSQQSLK) has biased composition (polar residues). The segment at 1574–1613 (HLNGLLRETEATNAILMEQIKLLKSEIRRLERNQEREKSA) is mediates interaction with RAB6A. A mediates interaction with RAB9A region spans residues 1574-1684 (HLNGLLRETE…SYLHSWSGLR (111 aa)). Residues 1609–1659 (REKSAANLEYLKNVLLQFIFLKPGSERERLLPVINTMLQLSPEEKGKLAAV) form the GRIP domain.

In terms of assembly, homodimer. Interacts (via GRIP domain) with RAB6A (preferentially in its GTP-bound form). May interact (RAB6A-dependent) with ARL1; according to PubMed:19703403, RAB6A and ARL1 are not involved in GCC2 Golgi localization as proposed by PubMed:18243103. Interacts (probably via GRIP domain) with RAB9A (preferentially in its GTP-bound form). Interacts with CLASP1 and CLASP2; recruits both proteins to membranes of the TGN. Interacts with STX16. In terms of tissue distribution, ubiquitous.

Its subcellular location is the cytoplasm. It is found in the golgi apparatus. The protein resides in the trans-Golgi network membrane. In terms of biological role, golgin which probably tethers transport vesicles to the trans-Golgi network (TGN) and regulates vesicular transport between the endosomes and the Golgi. As a RAB9A effector it is involved in recycling of the mannose 6-phosphate receptor from the late endosomes to the TGN. May also play a role in transport between the recycling endosomes and the Golgi. Required for maintenance of the Golgi structure, it is involved in the biogenesis of noncentrosomal, Golgi-associated microtubules through recruitment of CLASP1 and CLASP2. The sequence is that of GRIP and coiled-coil domain-containing protein 2 (GCC2) from Homo sapiens (Human).